Reading from the N-terminus, the 685-residue chain is Sodium-dependent phosphate transporter 1-A (685 aa).

Helical transmembrane passes span 21-41 (IMAP…VLAF), 66-86 (ACIL…AKVS), 106-126 (LMAG…AASF), 162-182 (IVLS…LLFL), 207-227 (ACTI…LLGF), and 234-254 (GIIL…WFVV). Disordered stretches follow at residues 438-458 (RNRD…HGAD) and 483-513 (EAEE…HDQD). Positions 483 to 496 (EAEEQEEGSVEDVE) are enriched in acidic residues. Over residues 497–513 (TDRKSSSSSLEERHDQD) the composition is skewed to basic and acidic residues. 4 helical membrane passes run 517-537 (VSLL…FAHG), 565-585 (ATPI…LWVW), 606-626 (FSIE…GLPI), and 656-676 (IFLA…GIMA).

It belongs to the inorganic phosphate transporter (PiT) (TC 2.A.20) family.

Its subcellular location is the membrane. Sodium-phosphate symporter which plays a fundamental housekeeping role in phosphate transport. The protein is Sodium-dependent phosphate transporter 1-A (slc20a1-a) of Xenopus laevis (African clawed frog).